Here is a 211-residue protein sequence, read N- to C-terminus: dITP/XTP pyrophosphatase (211 aa).

Residue 7–12 (TSNKKK) participates in substrate binding. Mg(2+)-binding residues include glutamate 43 and aspartate 72. The active-site Proton acceptor is the aspartate 72. Substrate-binding positions include serine 73, 169-172 (FGYD), lysine 190, and 195-196 (HR).

It belongs to the HAM1 NTPase family. Homodimer. Mg(2+) is required as a cofactor.

The enzyme catalyses XTP + H2O = XMP + diphosphate + H(+). It catalyses the reaction dITP + H2O = dIMP + diphosphate + H(+). It carries out the reaction ITP + H2O = IMP + diphosphate + H(+). In terms of biological role, pyrophosphatase that catalyzes the hydrolysis of nucleoside triphosphates to their monophosphate derivatives, with a high preference for the non-canonical purine nucleotides XTP (xanthosine triphosphate), dITP (deoxyinosine triphosphate) and ITP. Seems to function as a house-cleaning enzyme that removes non-canonical purine nucleotides from the nucleotide pool, thus preventing their incorporation into DNA/RNA and avoiding chromosomal lesions. This Hydrogenobaculum sp. (strain Y04AAS1) protein is dITP/XTP pyrophosphatase.